A 269-amino-acid polypeptide reads, in one-letter code: Lipid II flippase Amj (269 aa).

The next 7 membrane-spanning stretches (helical) occupy residues 1–21 (MHVI…IHSI), 31–51 (SGAR…MVIV), 84–104 (FLIF…PSFV), 105–125 (ALFS…FQVF), 161–181 (LFVI…SALY), 192–212 (TAVM…AIFV), and 245–265 (VAGT…IAWL).

The protein belongs to the Amj family.

It is found in the cell membrane. Its pathway is cell wall biogenesis; peptidoglycan biosynthesis. Functionally, involved in peptidoglycan biosynthesis. Transports lipid-linked peptidoglycan precursors from the inner to the outer leaflet of the cytoplasmic membrane. May serve as a defense mechanism against naturally occurring MurJ antagonists. This chain is Lipid II flippase Amj, found in Bacillus subtilis (strain 168).